Consider the following 152-residue polypeptide: Transcriptional regulator MraZ (152 aa).

SpoVT-AbrB domains follow at residues 5–52 (ATLV…TLPE) and 81–124 (ASEC…DEQV).

It belongs to the MraZ family. Forms oligomers.

It is found in the cytoplasm. Its subcellular location is the nucleoid. In terms of biological role, negatively regulates its own expression and that of the subsequent genes in the proximal part of the division and cell wall (dcw) gene cluster. Acts by binding directly to DNA. May also regulate the expression of genes outside the dcw cluster. The sequence is that of Transcriptional regulator MraZ from Proteus mirabilis (strain HI4320).